Reading from the N-terminus, the 472-residue chain is Protein PIN-LIKES 1 (472 aa).

The Lumenal segment spans residues 1-93; it reads MSLTQSAKLH…FYSMRMRLLD (93 aa). A helical membrane pass occupies residues 94–114; that stretch reads LFITSSIPVAKILLITGIGFY. At 115–133 the chain is on the cytoplasmic side; it reads LALDQVNILNHDARKQLNN. A helical transmembrane segment spans residues 134–154; it reads IVFYVFSPSLVASSLSETITY. At 155-161 the chain is on the lumenal side; the sequence is ESMVKMW. A helical membrane pass occupies residues 162 to 182; the sequence is FMPLNVLLTFIIGSFLGWIVI. Over 183-193 the chain is Cytoplasmic; it reads KITKPPSHLRG. A helical membrane pass occupies residues 194–214; that stretch reads IIVGCCAAGNLGNMPLIIIPA. Topologically, residues 215 to 231 are lumenal; sequence ICNEKGSPFGDPESCEK. A helical transmembrane segment spans residues 232 to 252; that stretch reads FGLGYIALSMAIGAIYIWTYV. Residues 253 to 309 lie on the Cytoplasmic side of the membrane; the sequence is YNLMRMLANPAGETAINSTSSTMPLISPKVEVAEQVGTWGKVKQRVCSVAEKINLRT. Residues 310 to 330 form a helical membrane-spanning segment; sequence IFAPSTIAALIALAVGLNPLL. At 331–347 the chain is on the lumenal side; the sequence is RKLLVGNTAPLRVIEDS. Residues 348-368 traverse the membrane as a helical segment; it reads VSLLGDGAIPVLTLIVGGNLL. Residues 369-379 lie on the Cytoplasmic side of the membrane; that stretch reads NGLRGSGINKS. A helical transmembrane segment spans residues 380–400; the sequence is VIMGVVVVRYLLLPILGVFIV. The Lumenal segment spans residues 401–413; it reads RGAHYLGLVTSEP. The chain crosses the membrane as a helical span at residues 414 to 434; the sequence is LYQFVLLLQYVVPPAMNLGTI. Residues 435–446 lie on the Cytoplasmic side of the membrane; sequence TQLFGSGESECS. The chain crosses the membrane as a helical span at residues 447 to 467; that stretch reads VILFWSYALASVSLTVWPTFF. Residues 468 to 472 are Lumenal-facing; the sequence is MWLVA.

The protein belongs to the auxin efflux carrier (TC 2.A.69.2) family. In terms of tissue distribution, expressed in flowers.

It is found in the endoplasmic reticulum membrane. In terms of biological role, involved in cellular auxin homeostasis by regulating auxin metabolism. Regulates intracellular auxin accumulation at the endoplasmic reticulum and thus auxin availability for nuclear auxin signaling. The polypeptide is Protein PIN-LIKES 1 (Arabidopsis thaliana (Mouse-ear cress)).